The sequence spans 289 residues: 5'-adenylylsulfate reductase-like 7 (289 aa).

An N-terminal signal peptide occupies residues 1-23 (MNLWVSIFLVSAIAGSCLPSGFA). The Thioredoxin domain maps to 37 to 157 (SVIEQKCPRS…LIQFYKETTG (121 aa)). Residues asparagine 132 and asparagine 184 are each glycosylated (N-linked (GlcNAc...) asparagine). The helical transmembrane segment at 198–218 (MVLALMFLSLKLAILIFPIMG) threads the bilayer.

It is found in the membrane. The polypeptide is 5'-adenylylsulfate reductase-like 7 (APRL7) (Arabidopsis thaliana (Mouse-ear cress)).